Here is a 380-residue protein sequence, read N- to C-terminus: Large ribosomal subunit protein mL38 (380 aa).

Residues methionine 1–glycine 26 constitute a mitochondrion transit peptide. Residues arginine 99–threonine 127 adopt a coiled-coil conformation.

Belongs to the phosphatidylethanolamine-binding protein family. Mitochondrion-specific ribosomal protein mL38 subfamily. Component of the mitochondrial large ribosomal subunit (mt-LSU). Mature mammalian 55S mitochondrial ribosomes consist of a small (28S) and a large (39S) subunit. The 28S small subunit contains a 12S ribosomal RNA (12S mt-rRNA) and 30 different proteins. The 39S large subunit contains a 16S rRNA (16S mt-rRNA), a copy of mitochondrial valine transfer RNA (mt-tRNA(Val)), which plays an integral structural role, and 52 different proteins. mL38 is located at the central protuberance.

It is found in the mitochondrion. The polypeptide is Large ribosomal subunit protein mL38 (MRPL38) (Homo sapiens (Human)).